The following is a 198-amino-acid chain: Protein GrpE (198 aa).

It belongs to the GrpE family. In terms of assembly, homodimer.

It localises to the cytoplasm. Participates actively in the response to hyperosmotic and heat shock by preventing the aggregation of stress-denatured proteins, in association with DnaK and GrpE. It is the nucleotide exchange factor for DnaK and may function as a thermosensor. Unfolded proteins bind initially to DnaJ; upon interaction with the DnaJ-bound protein, DnaK hydrolyzes its bound ATP, resulting in the formation of a stable complex. GrpE releases ADP from DnaK; ATP binding to DnaK triggers the release of the substrate protein, thus completing the reaction cycle. Several rounds of ATP-dependent interactions between DnaJ, DnaK and GrpE are required for fully efficient folding. In Lysinibacillus sphaericus (Bacillus sphaericus), this protein is Protein GrpE.